A 393-amino-acid chain; its full sequence is S-adenosylmethionine synthase (393 aa).

Residue His-16 participates in ATP binding. Asp-18 provides a ligand contact to Mg(2+). Glu-44 lines the K(+) pocket. Residues Glu-57 and Gln-100 each coordinate L-methionine. The flexible loop stretch occupies residues Gln-100–Gly-110. ATP contacts are provided by residues Asp-165–Lys-167, Arg-231–Phe-232, Asp-240, Arg-246–Lys-247, and Lys-267. L-methionine is bound at residue Asp-240. An L-methionine-binding site is contributed by Lys-271.

It belongs to the AdoMet synthase family. As to quaternary structure, homotetramer; dimer of dimers. It depends on Mg(2+) as a cofactor. K(+) serves as cofactor.

The protein resides in the cytoplasm. It carries out the reaction L-methionine + ATP + H2O = S-adenosyl-L-methionine + phosphate + diphosphate. It functions in the pathway amino-acid biosynthesis; S-adenosyl-L-methionine biosynthesis; S-adenosyl-L-methionine from L-methionine: step 1/1. Its function is as follows. Catalyzes the formation of S-adenosylmethionine (AdoMet) from methionine and ATP. The overall synthetic reaction is composed of two sequential steps, AdoMet formation and the subsequent tripolyphosphate hydrolysis which occurs prior to release of AdoMet from the enzyme. The protein is S-adenosylmethionine synthase of Coxiella burnetii (strain CbuG_Q212) (Coxiella burnetii (strain Q212)).